Reading from the N-terminus, the 208-residue chain is Ribosomal RNA small subunit methyltransferase G (208 aa).

S-adenosyl-L-methionine-binding positions include glycine 78, phenylalanine 83, 101 to 103 (ERS), 129 to 130 (IE), and arginine 142.

The protein belongs to the methyltransferase superfamily. RNA methyltransferase RsmG family.

It is found in the cytoplasm. In terms of biological role, specifically methylates the N7 position of a guanine in 16S rRNA. This chain is Ribosomal RNA small subunit methyltransferase G, found in Borreliella burgdorferi (strain ZS7) (Borrelia burgdorferi).